Here is a 133-residue protein sequence, read N- to C-terminus: Gamma-crystallin 1 (133 aa).

Residues 1–41 (WMLYEHPNYTGHQYFLRRGEYPDFQQWMGLNDSIRSCRVIP) form the Beta/gamma crystallin 'Greek key' 2 domain. The interval 42-46 (QHRGS) is connecting peptide. Beta/gamma crystallin 'Greek key' domains follow at residues 47–87 (FRLR…NVLE) and 88–130 (GHWI…RRVQ).

Belongs to the beta/gamma-crystallin family. In terms of assembly, monomer.

In terms of biological role, crystallins are the dominant structural components of the vertebrate eye lens. The polypeptide is Gamma-crystallin 1 (Rana temporaria (European common frog)).